The primary structure comprises 439 residues: Telomeric repeat-binding factor 1 (439 aa).

The tract at residues 1 to 36 (MAEDVSSAAPSPRGCADGRDADPTEEQMAETERNDE) is disordered. Ala2 is modified (N-acetylalanine). Phosphoserine is present on Ser11. Acidic residues predominate over residues 23-36 (PTEEQMAETERNDE). The segment at 58–268 (EEEEEDAGLV…AAAKVVESKR (211 aa)) is TRFH mediates dimerization. Lys213 is covalently cross-linked (Glycyl lysine isopeptide (Lys-Gly) (interchain with G-Cter in SUMO2)). Position 219 is a phosphoserine; by ATM (Ser219). The interval 265-378 (ESKRTRTITS…PVTPEKHRAR (114 aa)) is interaction with RLIM. Positions 266–311 (SKRTRTITSQDKPSGNDVEMETEANLDTRKSVSDKQSAVTESSEGT) are disordered. Residues 299-311 (DKQSAVTESSEGT) show a composition bias toward polar residues. Lys325 is covalently cross-linked (Glycyl lysine isopeptide (Lys-Gly) (interchain with G-Cter in SUMO2)). Residues 326–375 (LQHGTQQQDLNKKERRVGTPQSTKKKKESRRATESRIPVSKSQPVTPEKH) are disordered. Positions 337–356 (KKERRVGTPQSTKKKKESRR) match the Nuclear localization signal motif. Lys366 is covalently cross-linked (Glycyl lysine isopeptide (Lys-Gly) (interchain with G-Cter in SUMO2)). The region spanning 375–432 (HRARKRQAWLWEEDKNLRSGVRKYGEGNWSKILLHYKFNNRTSVMLKDRWRTMKKLKL) is the HTH myb-type domain. Positions 403 to 428 (WSKILLHYKFNNRTSVMLKDRWRTMK) form a DNA-binding region, H-T-H motif.

Homodimer; can contain both isoforms. Found in a complex with POT1; TINF2 and TNKS1. Interacts with ATM, TINF2, TNKS1, TNKS2, PINX1, NEK2 and MAPRE1. Component of the shelterin complex (telosome) composed of TERF1, TERF2, TINF2, TERF2IP ACD and POT1. Interacts with RLIM (via N-terminus). Interacts with FBXO4. Interaction with TINF2 protects against interaction with FBXO4 and subsequent polyubiquitination and proteasomal degradation. Interacts with GNL3L; this interaction promotes homodimerization. Interacts with TIN2. Interacts with RTEL1. Interactions with GNL3L and TIN2 are mutually exclusive. Interacts with CCDC79/TERB1. Interacts with TRIOBP isoform 1; mediates TERF1 localization to the centrosome. Post-translationally, phosphorylated preferentially on Ser-219 in an ATM-dependent manner in response to ionizing DNA damage. ADP-ribosylation by TNKS1 or TNKS2 diminishes its ability to bind to telomeric DNA. In terms of processing, ubiquitinated by RLIM/RNF12, leading to its degradation by the proteasome. Ubiquitinated by a SCF (SKP1-CUL1-F-box protein) ubiquitin-protein ligase complex, leading to its degradation by the proteasome. In terms of tissue distribution, highly expressed and ubiquitous. Isoform Pin2 predominates.

It localises to the nucleus. The protein resides in the cytoplasm. It is found in the cytoskeleton. The protein localises to the spindle. Its subcellular location is the chromosome. It localises to the telomere. Binds the telomeric double-stranded 5'-TTAGGG-3' repeat and negatively regulates telomere length. Involved in the regulation of the mitotic spindle. Component of the shelterin complex (telosome) that is involved in the regulation of telomere length and protection. Shelterin associates with arrays of double-stranded 5'-TTAGGG-3' repeats added by telomerase and protects chromosome ends; without its protective activity, telomeres are no longer hidden from the DNA damage surveillance and chromosome ends are inappropriately processed by DNA repair pathways. This chain is Telomeric repeat-binding factor 1 (TERF1), found in Homo sapiens (Human).